A 177-amino-acid chain; its full sequence is Large ribosomal subunit protein uL6 (177 aa).

The protein belongs to the universal ribosomal protein uL6 family. As to quaternary structure, part of the 50S ribosomal subunit.

Its function is as follows. This protein binds to the 23S rRNA, and is important in its secondary structure. It is located near the subunit interface in the base of the L7/L12 stalk, and near the tRNA binding site of the peptidyltransferase center. The chain is Large ribosomal subunit protein uL6 from Aliivibrio fischeri (strain MJ11) (Vibrio fischeri).